An 845-amino-acid chain; its full sequence is Dynein axonemal assembly factor 5 (845 aa).

HEAT repeat units lie at residues 47–84 (DVFDKLYLHLLKCYEDRFESVRSKAIQVVSAFLSSLPP), 138–175 (ECYPLVVKILIKSIKDDYPVVQREGCSAVVTLSRLADT), 180–217 (PFTESILLPLYTMLNHKHAQARISAIQAIARLSLHMDA), 260–297 (SFFERILPLVLCCLKDESPEVLNHIYPQWLKCGIQYFN), 332–369 (QRSLRLLQLITRETSDWKDNVRLHALKLLYQFVLHAEA), 523–561 (NFGQTLIEKMVKLLNTSVPKIHERWFHLALQDVINLDAA), 674–715 (SESV…MSVE), and 766–803 (AIVKRAMDLLLLYHESPEKDMRAAVAVTLKVLAKSHPE).

This sequence belongs to the DNAAF5 family. As to expression, expressed in testis.

The protein resides in the cytoplasm. It localises to the dynein axonemal particle. Functionally, cytoplasmic protein involved in the delivery of the dynein machinery to the motile cilium. It is required for the assembly of the axonemal dynein inner and outer arms, two structures attached to the peripheral outer doublet A microtubule of the axoneme, that play a crucial role in cilium motility. The sequence is that of Dynein axonemal assembly factor 5 from Drosophila melanogaster (Fruit fly).